Here is a 257-residue protein sequence, read N- to C-terminus: NAD-capped RNA hydrolase NudC (257 aa).

Arginine 69 is a binding site for substrate. The Zn(2+) site is built by cysteine 98 and cysteine 101. Glutamate 111 contributes to the substrate binding site. Positions 116 and 119 each coordinate Zn(2+). Tyrosine 124 lines the substrate pocket. Positions proline 125–threonine 248 constitute a Nudix hydrolase domain. Alanine 158, glutamate 174, and glutamate 178 together coordinate a divalent metal cation. Positions glycine 159–glycine 180 match the Nudix box motif. Glutamine 192–serine 199 is a substrate binding site. An a divalent metal cation-binding site is contributed by glutamate 219. Alanine 241 lines the substrate pocket.

It belongs to the Nudix hydrolase family. NudC subfamily. As to quaternary structure, homodimer. Mg(2+) is required as a cofactor. The cofactor is Mn(2+). Zn(2+) serves as cofactor.

It carries out the reaction a 5'-end NAD(+)-phospho-ribonucleoside in mRNA + H2O = a 5'-end phospho-adenosine-phospho-ribonucleoside in mRNA + beta-nicotinamide D-ribonucleotide + 2 H(+). The enzyme catalyses NAD(+) + H2O = beta-nicotinamide D-ribonucleotide + AMP + 2 H(+). It catalyses the reaction NADH + H2O = reduced beta-nicotinamide D-ribonucleotide + AMP + 2 H(+). Functionally, mRNA decapping enzyme that specifically removes the nicotinamide adenine dinucleotide (NAD) cap from a subset of mRNAs by hydrolyzing the diphosphate linkage to produce nicotinamide mononucleotide (NMN) and 5' monophosphate mRNA. The NAD-cap is present at the 5'-end of some mRNAs and stabilizes RNA against 5'-processing. Has preference for mRNAs with a 5'-end purine. Catalyzes the hydrolysis of a broad range of dinucleotide pyrophosphates. The sequence is that of NAD-capped RNA hydrolase NudC from Salmonella typhi.